The following is a 285-amino-acid chain: Dermonecrotic toxin LiSicTox-alphaIA2aii (285 aa).

The propeptide occupies 1–5; that stretch reads DVEER. Histidine 17 is an active-site residue. Mg(2+) is bound by residues glutamate 37 and aspartate 39. Histidine 53 (nucleophile) is an active-site residue. 2 disulfide bridges follow: cysteine 57/cysteine 63 and cysteine 59/cysteine 202. Aspartate 97 is a Mg(2+) binding site. A glycan (N-linked (GlcNAc...) asparagine) is linked at asparagine 262.

The protein belongs to the arthropod phospholipase D family. Class II subfamily. Class IIa sub-subfamily. It depends on Mg(2+) as a cofactor. In terms of tissue distribution, expressed by the venom gland.

The protein localises to the secreted. It catalyses the reaction an N-(acyl)-sphingosylphosphocholine = an N-(acyl)-sphingosyl-1,3-cyclic phosphate + choline. The enzyme catalyses an N-(acyl)-sphingosylphosphoethanolamine = an N-(acyl)-sphingosyl-1,3-cyclic phosphate + ethanolamine. It carries out the reaction a 1-acyl-sn-glycero-3-phosphocholine = a 1-acyl-sn-glycero-2,3-cyclic phosphate + choline. The catalysed reaction is a 1-acyl-sn-glycero-3-phosphoethanolamine = a 1-acyl-sn-glycero-2,3-cyclic phosphate + ethanolamine. Dermonecrotic toxins cleave the phosphodiester linkage between the phosphate and headgroup of certain phospholipids (sphingolipid and lysolipid substrates), forming an alcohol (often choline) and a cyclic phosphate. This toxin acts on sphingomyelin (SM) with high activity. It may also act on ceramide phosphoethanolamine (CPE), lysophosphatidylcholine (LPC) and lysophosphatidylethanolamine (LPE), but not on lysophosphatidylserine (LPS), and lysophosphatidylglycerol (LPG). It acts by transphosphatidylation, releasing exclusively cyclic phosphate products as second products. Shows high hemolytic activity. Induces dermonecrosis, vascular permeability, edema, inflammatory response, and platelet aggregation. Also shows cytotoxicity against renal epithelial cells. In addition, also induces hemolysis in a complement-dependent manner and probably also in a complement-independent manner. The hemolysis provoked in a complement-independent manner may be composed of several steps. The toxin may bind to erythrocyte membranes, may hydrolyze membrane phospholipids (SM and LPC) thus generating metabolism products that may cause hemolysis, probably by provoking an increase of calcium inside cells. The calcium influx may be due to the opening of L-type calcium channels, since L-type calcium channel blockers inhibit calcium influx. In vivo, is lethal to mice when intraperitoneally injected. The chain is Dermonecrotic toxin LiSicTox-alphaIA2aii from Loxosceles intermedia (Brown spider).